The chain runs to 179 residues: Large ribosomal subunit protein uL5 (179 aa).

The protein belongs to the universal ribosomal protein uL5 family. As to quaternary structure, part of the 50S ribosomal subunit; part of the 5S rRNA/L5/L18/L25 subcomplex. Contacts the 5S rRNA and the P site tRNA. Forms a bridge to the 30S subunit in the 70S ribosome.

Functionally, this is one of the proteins that bind and probably mediate the attachment of the 5S RNA into the large ribosomal subunit, where it forms part of the central protuberance. In the 70S ribosome it contacts protein S13 of the 30S subunit (bridge B1b), connecting the 2 subunits; this bridge is implicated in subunit movement. Contacts the P site tRNA; the 5S rRNA and some of its associated proteins might help stabilize positioning of ribosome-bound tRNAs. The sequence is that of Large ribosomal subunit protein uL5 from Burkholderia multivorans (strain ATCC 17616 / 249).